The chain runs to 295 residues: Probable cell division protein WhiA (295 aa).

The H-T-H motif DNA-binding region spans 262-293 (SLRELGKKLNLTKSQIYSKLKRIIKIAERFGD).

Belongs to the WhiA family.

Its function is as follows. Involved in cell division and chromosome segregation. The polypeptide is Probable cell division protein WhiA (Thermotoga maritima (strain ATCC 43589 / DSM 3109 / JCM 10099 / NBRC 100826 / MSB8)).